Reading from the N-terminus, the 28-residue chain is SADQPNSIPPRERKAGCKNFYWKGLTSC.

C17 and C28 are disulfide-bonded.

Belongs to the somatostatin family.

Its subcellular location is the secreted. In terms of biological role, somatostatin inhibits the release of somatotropin. The polypeptide is Somatostatin-2 (sst2) (Oreochromis niloticus (Nile tilapia)).